An 809-amino-acid chain; its full sequence is Eukaryotic translation initiation factor 3 subunit C (809 aa).

Residues 1-102 form a disordered region; it reads MSRFFAASYE…DSDESDEASK (102 aa). Acidic residues-rich tracts occupy residues 18 to 30 and 37 to 59; these read SEEDLLSSSEEEL and SEEESDDSFFNDSESESDFDSDD. The region spanning 605–780 is the PCI domain; sequence FHEHINLDLI…SVLSIAKGAE (176 aa).

This sequence belongs to the eIF-3 subunit C family. In terms of assembly, component of the eukaryotic translation initiation factor 3 (eIF-3) complex.

Its subcellular location is the cytoplasm. Its function is as follows. Component of the eukaryotic translation initiation factor 3 (eIF-3) complex, which is involved in protein synthesis of a specialized repertoire of mRNAs and, together with other initiation factors, stimulates binding of mRNA and methionyl-tRNAi to the 40S ribosome. The eIF-3 complex specifically targets and initiates translation of a subset of mRNAs involved in cell proliferation. In Vanderwaltozyma polyspora (strain ATCC 22028 / DSM 70294 / BCRC 21397 / CBS 2163 / NBRC 10782 / NRRL Y-8283 / UCD 57-17) (Kluyveromyces polysporus), this protein is Eukaryotic translation initiation factor 3 subunit C.